Here is a 621-residue protein sequence, read N- to C-terminus: Interleukin-1 receptor-associated kinase-like 2 (621 aa).

The Death domain maps to 13–94; the sequence is LDDLCRNMDT…RAAQIILNWK (82 aa). Residues 113–175 are disordered; sequence GKPLAASVRN…TASADSKDFS (63 aa). The span at 157–169 shows a compositional bias: polar residues; the sequence is ASSSLKTNQTASA. The 271-residue stretch at 206–476 folds into the Protein kinase domain; sequence FNPSHKISEG…AEALVMAACL (271 aa). Residues 212-220, lysine 233, and 333-336 contribute to the ATP site; these read ISEGTFADV and KSSN. Over residues 503-522 the composition is skewed to polar residues; that stretch reads ETSLPCSGLSEGTGSSFNTP. A disordered region spans residues 503 to 534; sequence ETSLPCSGLSEGTGSSFNTPEETDDVDNSSFD.

Belongs to the protein kinase superfamily. TKL Ser/Thr protein kinase family. Pelle subfamily. Interacts with MYD88. IL-1 stimulation leads to the formation of a signaling complex which dissociates from the IL-1 receptor following the binding of PELI1.

Binds to the IL-1 type I receptor following IL-1 engagement, triggering intracellular signaling cascades leading to transcriptional up-regulation and mRNA stabilization. This is Interleukin-1 receptor-associated kinase-like 2 (IRAK2) from Bos taurus (Bovine).